A 634-amino-acid polypeptide reads, in one-letter code: Dynein axonemal assembly factor 1 (634 aa).

The disordered stretch occupies residues 1–80 (MHPEVSEPPV…SRDDREDRGP (80 aa)). The segment covering 22–42 (AGDHGDAGPGIRKEEISETKE) has biased composition (basic and acidic residues). The span at 48 to 62 (CTTSCPSQQQPSGDN) shows a compositional bias: polar residues. Basic and acidic residues predominate over residues 70-80 (HSRDDREDRGP). LRR repeat units lie at residues 101–123 (ALNDTLYLHFKGFDRIENLEEYT), 124–145 (GLRCLWLECNGIQRIENLQAQS), 146–167 (ELRCLFLQVNLLHKIENLEPLQ), 168–189 (KLDALNLSNNYIKTIENLSCLP), 190–211 (VLNTLQMAHNRLETVADIEHLR), and 215–236 (RLCVLDLSHNALSDPEILSVLE). One can recognise an LRRCT domain in the interval 249–288 (NPVTKHIPNYRRTVTVRLKHLTYLDDRPVFPKDRACAEAW). The span at 326 to 336 (EERKKARDRGE) shows a compositional bias: basic and acidic residues. Residues 326-358 (EERKKARDRGETPLPDSEGSIPTSPEAEEKQPM) are disordered. Serine 349 carries the phosphoserine modification. A Phosphothreonine modification is found at threonine 462. A phosphoserine mark is found at serine 465 and serine 488. Disordered stretches follow at residues 481-505 (ISSLSDDSDPELDELSLSTSEATPT) and 559-634 (ELND…FGLD).

It belongs to the DNAAF1 family.

It is found in the cell projection. It localises to the cilium. Its function is as follows. Cilium-specific protein required for the stability of the ciliary architecture. Plays a role in cytoplasmic preassembly of dynein arms. Involved in regulation of microtubule-based cilia and actin-based brush border microvilli. This chain is Dynein axonemal assembly factor 1 (Dnaaf1), found in Mus musculus (Mouse).